A 1002-amino-acid polypeptide reads, in one-letter code: ToxR-activated gene A lipoprotein (1002 aa).

Residues 1-21 (MVVRYSLLMKVSFAILIFLVG) form the signal peptide. A lipid anchor (N-palmitoyl cysteine) is attached at Cys22. Cys22 carries S-diacylglycerol cysteine lipidation. Residues 31 to 53 (DQYLTDPDISEQTKKPSRPIIDE) form a disordered region. The region spanning 45 to 139 (KPSRPIIDEK…KIEFITLNEI (95 aa)) is the Fibronectin type-III domain. The Peptidase M66 domain maps to 282-536 (ELIIQNIDLG…QDWLKNGAVV (255 aa)). A Zn(2+)-binding site is contributed by His432. Glu433 is an active-site residue. Positions 436 and 442 each coordinate Zn(2+).

Zn(2+) is required as a cofactor.

It localises to the cell membrane. This Vibrio cholerae serotype O1 (strain ATCC 39315 / El Tor Inaba N16961) protein is ToxR-activated gene A lipoprotein (tagA).